A 311-amino-acid chain; its full sequence is MTSKVYDPEQRKRMITGPQWWARCKQMNVLDSFINYYDSEKHAENAVIFLHGNAASSYLWRHVVPHIEPVARCIIPDLIGMGKSGKSGNGSYRLLDHYKYLTAWFELLNLPKKIIFVGHDWGACLAFHYSYEHQDKIKAIVHAESVVDVIESWDEWPDIEEDIALIKSEEGEKMVLENNFFVETMLPSKIMRKLEPEEFAAYLEPFKEKGEVRRPTLSWPREIPLVKGGKPDVVQIVRNYNAYLRASDDLPKMFIESDPGFFSNAIVEGAKKFPNTEFVKVKGLHFSQEDAPDEMGKYIKSFVERVLKNEQ.

Residues 45-291 form the AB hydrolase-1 domain; the sequence is NAVIFLHGNA…KGLHFSQEDA (247 aa). Substrate is bound by residues D162 and H285.

In terms of assembly, monomer.

It carries out the reaction coelenterazine h + O2 = excited coelenteramide h monoanion + hnu + CO2 + H(+). Its function is as follows. Upon binding the substrate, the enzyme catalyzes an oxygenation, producing a very short-lived hydroperoxide that cyclizes into a dioxetanone structure, which collapses, releasing a CO(2) molecule. The spontaneous breakdown of the dioxetanone releases the energy (about 50 kcal/mole) that is necessary to generate the excited state of the coelenteramide product, which is the singlet form of the monoanion. In vivo the product undergoes the process of nonradiative energy transfer to an accessory protein, a green fluorescent protein (GFP), which results in green bioluminescence. In vitro, in the absence of GFP, the product emits blue light. The protein is Coelenterazine h 2-monooxygenase of Renilla reniformis (Sea pansy).